The chain runs to 435 residues: Putative F-box/FBD/LRR-repeat protein At5g56810 (435 aa).

The region spanning 14 to 62 (PDRISQLPNDLLFRILSLIPVSDAMSTSLLSKRWKSVWKMLPTLVYNEN) is the F-box domain. 6 LRR repeats span residues 64–95 (CSNI…TLEL), 146–173 (LKLQ…YLTC), 174–199 (VNFE…FLQR), 222–248 (KEQA…NIFD), 266–291 (SVRV…SLDL), and 316–341 (YDNF…KLNH). The 52-residue stretch at 353 to 404 (CSVSEPSSVPECLSFHLETFQWIGYAGTFEEIAAAVYVLKNARCLKNATISL) folds into the FBD domain.

In Arabidopsis thaliana (Mouse-ear cress), this protein is Putative F-box/FBD/LRR-repeat protein At5g56810.